Consider the following 140-residue polypeptide: uncharacterized protein (140 aa).

This is an uncharacterized protein from Bacillus subtilis (strain 168).